The chain runs to 127 residues: MLQLLLAVFIGGGTGSVARWLLSMRFNPLHQAIPLGTLTANLIGAFIIGMGFAWFSRMTNIDPVWKVLITTGFCGGLTTFSTFSAEVVFLLQEGRFGWALLNVFVNLLGSFAMTALAFWLFSASTAH.

The next 4 helical transmembrane spans lie at 4 to 24 (LLLAVFIGGGTGSVARWLLSM), 35 to 55 (LGTLTANLIGAFIIGMGFAWF), 71 to 91 (TGFCGGLTTFSTFSAEVVFLL), and 103 to 123 (VFVNLLGSFAMTALAFWLFSA). Residues Gly75 and Thr78 each coordinate Na(+).

This sequence belongs to the fluoride channel Fluc/FEX (TC 1.A.43) family.

Its subcellular location is the cell inner membrane. It catalyses the reaction fluoride(in) = fluoride(out). Na(+) is not transported, but it plays an essential structural role and its presence is essential for fluoride channel function. Fluoride-specific ion channel. Important for reducing fluoride concentration in the cell, thus reducing its toxicity. The protein is Fluoride-specific ion channel FluC of Escherichia coli (strain ATCC 8739 / DSM 1576 / NBRC 3972 / NCIMB 8545 / WDCM 00012 / Crooks).